A 325-amino-acid polypeptide reads, in one-letter code: MIKSIPRIMLAPMQGVLDPFMRKLLTAYNDYDLCVSEFVRVVDQRLPKKTFYRLAPELLQGGLTDSGTPIRVQLLGQYPQWLAENAQLAIELGSYGIDFNCGCPSKTVNGSHGGAALLKDPELIYCATKAIREAVPKAQPVSVKMRLGWDCASQCFEIADAIQQAGADEITVHGRTKQDGYRAERINWQAIGQIQQRLNIPVIANGEILDFNSAQKCREITACCGLMIGRGALNTPNLSKVIKYNVAKMAWSEVLQLLYEYVNMPNERDSGFYHVARIKQWLHYLDKAYPEAVDLFQIVKTEHSYDGVKAHIEKAVGRNEKTNFQ.

FMN is bound by residues proline 12–glutamine 14 and glutamine 73. Catalysis depends on cysteine 103, which acts as the Proton donor. Residues lysine 144, asparagine 205–glutamate 207, and glycine 229–arginine 230 contribute to the FMN site.

This sequence belongs to the Dus family. DusC subfamily. The cofactor is FMN.

It catalyses the reaction 5,6-dihydrouridine(16) in tRNA + NADP(+) = uridine(16) in tRNA + NADPH + H(+). The catalysed reaction is 5,6-dihydrouridine(16) in tRNA + NAD(+) = uridine(16) in tRNA + NADH + H(+). In terms of biological role, catalyzes the synthesis of 5,6-dihydrouridine (D), a modified base found in the D-loop of most tRNAs, via the reduction of the C5-C6 double bond in target uridines. Specifically modifies U16 in tRNAs. This chain is tRNA-dihydrouridine(16) synthase, found in Haemophilus ducreyi (strain 35000HP / ATCC 700724).